The chain runs to 126 residues: Scygonadin (126 aa).

Residues 1 to 24 form the signal peptide; the sequence is MRSSLLLGLTVVVLLGVIVPPCMA.

In terms of tissue distribution, expressed in the ejaculatory ducts of mature males. Not detected in the ejaculatory ducts of immature males. Not detected in hepatopancreas, female reproductive tract, eyes, exoskeleton, subcuticular epithelia, heart, gills, stomach, muscle and hemocytes.

It localises to the secreted. In terms of biological role, has antibacterial activity against the Gram-positive bacterium M.luteus with an IC(90) of 125ug/ml. Has weak antibacterial activity against the Gram-negative bacterium A.hydrophila. The chain is Scygonadin from Scylla serrata (Mud crab).